We begin with the raw amino-acid sequence, 511 residues long: Bifunctional purine biosynthesis protein PurH (511 aa).

In terms of domain architecture, MGS-like spans 1–145 (MKKRALVSVS…KNHKFVSVIV (145 aa)).

Belongs to the PurH family.

The enzyme catalyses (6R)-10-formyltetrahydrofolate + 5-amino-1-(5-phospho-beta-D-ribosyl)imidazole-4-carboxamide = 5-formamido-1-(5-phospho-D-ribosyl)imidazole-4-carboxamide + (6S)-5,6,7,8-tetrahydrofolate. The catalysed reaction is IMP + H2O = 5-formamido-1-(5-phospho-D-ribosyl)imidazole-4-carboxamide. The protein operates within purine metabolism; IMP biosynthesis via de novo pathway; 5-formamido-1-(5-phospho-D-ribosyl)imidazole-4-carboxamide from 5-amino-1-(5-phospho-D-ribosyl)imidazole-4-carboxamide (10-formyl THF route): step 1/1. It functions in the pathway purine metabolism; IMP biosynthesis via de novo pathway; IMP from 5-formamido-1-(5-phospho-D-ribosyl)imidazole-4-carboxamide: step 1/1. This Bacillus cereus (strain Q1) protein is Bifunctional purine biosynthesis protein PurH.